We begin with the raw amino-acid sequence, 134 residues long: Profilin-2 (134 aa).

A disulfide bond links Cys13 and Cys118. The Involved in PIP2 interaction motif lies at 84-100; that stretch reads AVIRGKKGSGGITIKKT. At Thr114 the chain carries Phosphothreonine.

It belongs to the profilin family. Occurs in many kinds of cells as a complex with monomeric actin in a 1:1 ratio. Phosphorylated by MAP kinases.

Its subcellular location is the cytoplasm. It localises to the cytoskeleton. Its function is as follows. Binds to actin and affects the structure of the cytoskeleton. At high concentrations, profilin prevents the polymerization of actin, whereas it enhances it at low concentrations. The sequence is that of Profilin-2 from Olea europaea (Common olive).